The following is a 217-amino-acid chain: Transcriptional regulator NovE (217 aa).

Residues Met-1 to Gly-41 are disordered.

In terms of biological role, transcription regulator that specifically regulates expression of genes involved in the novobiocin biosynthesis pathway. Probably acts as a positive regulator of transcription. Does not bind DNA. This chain is Transcriptional regulator NovE (novE), found in Streptomyces niveus (Streptomyces spheroides).